The chain runs to 69 residues: Large ribosomal subunit protein uL30 (69 aa).

Belongs to the universal ribosomal protein uL30 family. In terms of assembly, part of the 50S ribosomal subunit.

The chain is Large ribosomal subunit protein uL30 from Rhizobium etli (strain CIAT 652).